A 257-amino-acid polypeptide reads, in one-letter code: Tryptophan synthase alpha chain (257 aa).

Active-site proton acceptor residues include Glu51 and Asp62.

The protein belongs to the TrpA family. In terms of assembly, tetramer of two alpha and two beta chains.

It carries out the reaction (1S,2R)-1-C-(indol-3-yl)glycerol 3-phosphate + L-serine = D-glyceraldehyde 3-phosphate + L-tryptophan + H2O. It functions in the pathway amino-acid biosynthesis; L-tryptophan biosynthesis; L-tryptophan from chorismate: step 5/5. Functionally, the alpha subunit is responsible for the aldol cleavage of indoleglycerol phosphate to indole and glyceraldehyde 3-phosphate. The polypeptide is Tryptophan synthase alpha chain (Nitratidesulfovibrio vulgaris (strain ATCC 29579 / DSM 644 / CCUG 34227 / NCIMB 8303 / VKM B-1760 / Hildenborough) (Desulfovibrio vulgaris)).